A 259-amino-acid chain; its full sequence is Acyl-[acyl-carrier-protein]--UDP-N-acetylglucosamine O-acyltransferase (259 aa).

Belongs to the transferase hexapeptide repeat family. LpxA subfamily. Homotrimer.

Its subcellular location is the cytoplasm. It carries out the reaction a (3R)-hydroxyacyl-[ACP] + UDP-N-acetyl-alpha-D-glucosamine = a UDP-3-O-[(3R)-3-hydroxyacyl]-N-acetyl-alpha-D-glucosamine + holo-[ACP]. Its pathway is glycolipid biosynthesis; lipid IV(A) biosynthesis; lipid IV(A) from (3R)-3-hydroxytetradecanoyl-[acyl-carrier-protein] and UDP-N-acetyl-alpha-D-glucosamine: step 1/6. Involved in the biosynthesis of lipid A, a phosphorylated glycolipid that anchors the lipopolysaccharide to the outer membrane of the cell. This is Acyl-[acyl-carrier-protein]--UDP-N-acetylglucosamine O-acyltransferase from Psychrobacter cryohalolentis (strain ATCC BAA-1226 / DSM 17306 / VKM B-2378 / K5).